Here is a 481-residue protein sequence, read N- to C-terminus: Leukocyte immunoglobulin-like receptor subfamily A member 6 (481 aa).

A signal peptide spans 1 to 23; sequence MTPALTALLCLGLSLGPRTRVQA. The Extracellular portion of the chain corresponds to 24-447; it reads GPFPKPTLWA…SHAKDYTVEN (424 aa). Cysteine 49 and cysteine 98 are disulfide-bonded. The segment covering 59-70 has biased composition (basic and acidic residues); sequence QLDKEGSPEPLD. Positions 59–78 are disordered; that stretch reads QLDKEGSPEPLDRNNPLEPK. Asparagine 139 carries an N-linked (GlcNAc...) asparagine glycan. Disulfide bonds link cysteine 144–cysteine 196 and cysteine 245–cysteine 296. Ig-like C2-type domains are found at residues 225-314 and 323-408; these read PSLL…DPLN and DTVS…HLLS. N-linked (GlcNAc...) asparagine glycans are attached at residues asparagine 301 and asparagine 340. A disulfide bridge links cysteine 345 with cysteine 396. The interval 419 to 439 is disordered; it reads SGHSGGSSLPPTGPPSTPASH. The chain crosses the membrane as a helical span at residues 448–468; it reads LIRMGMAGLVLVFLGILLFEA. The Cytoplasmic segment spans residues 469–481; that stretch reads QHSQRNPQDAAGR.

It is found in the membrane. Its function is as follows. May act as receptor for class I MHC antigens. This Homo sapiens (Human) protein is Leukocyte immunoglobulin-like receptor subfamily A member 6 (LILRA6).